The primary structure comprises 129 residues: Large ribosomal subunit protein uL22 (129 aa).

This sequence belongs to the universal ribosomal protein uL22 family. Part of the 50S ribosomal subunit.

In terms of biological role, this protein binds specifically to 23S rRNA; its binding is stimulated by other ribosomal proteins, e.g. L4, L17, and L20. It is important during the early stages of 50S assembly. It makes multiple contacts with different domains of the 23S rRNA in the assembled 50S subunit and ribosome. Functionally, the globular domain of the protein is located near the polypeptide exit tunnel on the outside of the subunit, while an extended beta-hairpin is found that lines the wall of the exit tunnel in the center of the 70S ribosome. In Brucella suis biovar 1 (strain 1330), this protein is Large ribosomal subunit protein uL22.